The following is a 160-amino-acid chain: Eosinophil cationic protein (160 aa).

The signal sequence occupies residues 1-27 (MVPKLFTSQICLLLLLGLMGVEGSLHA). Positions 28–72 (RPPQFTRAQWFAIQHISLNPPRCTIAMRAINNYRWRCKNQNTFLR) are required for nearly all of the bactericidal activity; partially involved in LPS-binding and bacterial membrane depolarization. His42 serves as the catalytic Proton acceptor. 4 disulfide bridges follow: Cys50-Cys110, Cys64-Cys123, Cys82-Cys138, and Cys89-Cys98. Residue Tyr60 is modified to 3'-nitrotyrosine. 65 to 69 (KNQNT) lines the substrate pocket. Residues Asn84, Asn92, and Asn119 are each glycosylated (N-linked (GlcNAc...) asparagine). The active-site Proton donor is His155.

Belongs to the pancreatic ribonuclease family. Interacts with bacterial lipopolysaccharide (LPS) and lipoteichoic acid (LTA). In vitro interacts with and insert into lipid bilayers composed of dioleoyl phosphatidylcholine and dioleoyl phosphatidylglycerol. In vitro, tends to form amyloid-like aggregates at pH 3, but not at pH 5, nor 7.

It localises to the secreted. Its function is as follows. Cytotoxin and helminthotoxin with low-efficiency ribonuclease activity. Possesses a wide variety of biological activities. Exhibits antibacterial activity, including cytoplasmic membrane depolarization of preferentially Gram-negative, but also Gram-positive strains. Promotes E.coli outer membrane detachment, alteration of the overall cell shape and partial loss of cell content. The protein is Eosinophil cationic protein (RNASE3) of Homo sapiens (Human).